The chain runs to 150 residues: 3-hydroxyacyl-[acyl-carrier-protein] dehydratase FabZ (150 aa).

Residue histidine 51 is part of the active site.

Belongs to the thioester dehydratase family. FabZ subfamily.

The protein localises to the cytoplasm. The enzyme catalyses a (3R)-hydroxyacyl-[ACP] = a (2E)-enoyl-[ACP] + H2O. Involved in unsaturated fatty acids biosynthesis. Catalyzes the dehydration of short chain beta-hydroxyacyl-ACPs and long chain saturated and unsaturated beta-hydroxyacyl-ACPs. This Geobacter metallireducens (strain ATCC 53774 / DSM 7210 / GS-15) protein is 3-hydroxyacyl-[acyl-carrier-protein] dehydratase FabZ.